The following is a 92-amino-acid chain: DNA-directed RNA polymerase subunit Rpo11 (92 aa).

The protein belongs to the archaeal Rpo11/eukaryotic RPB11/RPC19 RNA polymerase subunit family. In terms of assembly, part of the RNA polymerase complex.

It localises to the cytoplasm. The catalysed reaction is RNA(n) + a ribonucleoside 5'-triphosphate = RNA(n+1) + diphosphate. In terms of biological role, DNA-dependent RNA polymerase (RNAP) catalyzes the transcription of DNA into RNA using the four ribonucleoside triphosphates as substrates. The protein is DNA-directed RNA polymerase subunit Rpo11 of Halorubrum lacusprofundi (strain ATCC 49239 / DSM 5036 / JCM 8891 / ACAM 34).